Here is a 360-residue protein sequence, read N- to C-terminus: Uptake hydrogenase small subunit (360 aa).

The tat-type signal signal peptide spans 1 to 46 (MATAETFYDVIRRQGITRRSFTKFCSLTAASLGFGPGAATAMAEAL). The [4Fe-4S] cluster site is built by Cys-62, Cys-65, Cys-160, Cys-194, His-232, Cys-235, Cys-260, and Cys-266. Cys-275, Cys-294, and Cys-297 together coordinate [3Fe-4S] cluster.

This sequence belongs to the [NiFe]/[NiFeSe] hydrogenase small subunit family. In terms of assembly, heterodimer of a large and a small subunit. [4Fe-4S] cluster serves as cofactor. [3Fe-4S] cluster is required as a cofactor. Post-translationally, predicted to be exported by the Tat system. The position of the signal peptide cleavage has not been experimentally proven.

The protein localises to the cell membrane. The enzyme catalyses H2 + A = AH2. Its function is as follows. This enzyme recycles the H(2) produced by nitrogenase to increase the production of ATP and to protect nitrogenase against inhibition or damage by O(2) under carbon- or phosphate-limited conditions. The protein is Uptake hydrogenase small subunit (hupA) of Rhizobium leguminosarum bv. viciae.